Here is a 194-residue protein sequence, read N- to C-terminus: dTTP/UTP pyrophosphatase (194 aa).

Catalysis depends on Asp-73, which acts as the Proton acceptor.

The protein belongs to the Maf family. YhdE subfamily. A divalent metal cation is required as a cofactor.

The protein localises to the cytoplasm. The catalysed reaction is dTTP + H2O = dTMP + diphosphate + H(+). It carries out the reaction UTP + H2O = UMP + diphosphate + H(+). In terms of biological role, nucleoside triphosphate pyrophosphatase that hydrolyzes dTTP and UTP. May have a dual role in cell division arrest and in preventing the incorporation of modified nucleotides into cellular nucleic acids. This chain is dTTP/UTP pyrophosphatase, found in Geotalea uraniireducens (strain Rf4) (Geobacter uraniireducens).